The primary structure comprises 209 residues: Imidazole glycerol phosphate synthase subunit HisH (209 aa).

The region spanning 1–205 is the Glutamine amidotransferase type-1 domain; the sequence is MIAIIDYGMG…QGVVEAWKSS (205 aa). Cys-79 (nucleophile) is an active-site residue. Residues His-180 and Glu-182 contribute to the active site.

In terms of assembly, heterodimer of HisH and HisF.

Its subcellular location is the cytoplasm. The catalysed reaction is 5-[(5-phospho-1-deoxy-D-ribulos-1-ylimino)methylamino]-1-(5-phospho-beta-D-ribosyl)imidazole-4-carboxamide + L-glutamine = D-erythro-1-(imidazol-4-yl)glycerol 3-phosphate + 5-amino-1-(5-phospho-beta-D-ribosyl)imidazole-4-carboxamide + L-glutamate + H(+). The enzyme catalyses L-glutamine + H2O = L-glutamate + NH4(+). The protein operates within amino-acid biosynthesis; L-histidine biosynthesis; L-histidine from 5-phospho-alpha-D-ribose 1-diphosphate: step 5/9. In terms of biological role, IGPS catalyzes the conversion of PRFAR and glutamine to IGP, AICAR and glutamate. The HisH subunit catalyzes the hydrolysis of glutamine to glutamate and ammonia as part of the synthesis of IGP and AICAR. The resulting ammonia molecule is channeled to the active site of HisF. This chain is Imidazole glycerol phosphate synthase subunit HisH, found in Bacillus cereus (strain G9842).